The sequence spans 1102 residues: Putative ISWI chromatin-remodeling complex subunit YPL216W (1102 aa).

One can recognise a WAC domain in the interval 23-131 (ETPWVIKESS…DTVCLKTIQK (109 aa)). The segment at 271–301 (ELYTPLTIPPESDVEPADWKETSETSETSET) is disordered. The DDT domain occupies 375-435 (QFPTERLLVV…FLKTYNSKGS (61 aa)). Residues 673 to 743 (CNGIRLKLDS…EDIAFLEAKL (71 aa)) adopt a coiled-coil conformation.

The protein resides in the nucleus. Functionally, may be required for the activity of an ISWI chromatin-remodeling complex. The protein is Putative ISWI chromatin-remodeling complex subunit YPL216W of Saccharomyces cerevisiae (strain ATCC 204508 / S288c) (Baker's yeast).